Here is a 258-residue protein sequence, read N- to C-terminus: UPF0246 protein HI_0984 (258 aa).

This sequence belongs to the UPF0246 family.

This chain is UPF0246 protein HI_0984, found in Haemophilus influenzae (strain ATCC 51907 / DSM 11121 / KW20 / Rd).